We begin with the raw amino-acid sequence, 159 residues long: Large ribosomal subunit protein uL11 (159 aa).

Belongs to the universal ribosomal protein uL11 family. In terms of assembly, part of the ribosomal stalk of the 50S ribosomal subunit. Interacts with L10 and the large rRNA to form the base of the stalk. L10 forms an elongated spine to which L12 dimers bind in a sequential fashion forming a multimeric L10(L12)X complex.

In terms of biological role, forms part of the ribosomal stalk which helps the ribosome interact with GTP-bound translation factors. This Nitrosopumilus maritimus (strain SCM1) protein is Large ribosomal subunit protein uL11.